We begin with the raw amino-acid sequence, 406 residues long: E3 ubiquitin-protein ligase RING1 (406 aa).

At Thr-24 the chain carries Phosphothreonine. Residues 30 to 234 (MDGTEIAVSP…GGAGSEDSGD (205 aa)) are necessary for transcriptional repression. Residue Ser-38 is modified to Phosphoserine. The RING-type zinc-finger motif lies at 48 to 88 (CPICLDMLKNTMTTKECLHRFCSDCIVTALRSGNKECPTCR). Ser-140, Ser-187, and Ser-190 each carry phosphoserine. Disordered regions lie at residues 151–263 (HRAQ…GEIE) and 309–354 (QQQE…PSLE). A compositionally biased stretch (acidic residues) spans 175-187 (EPGEGEGDGEDIS). The short motif at 201–204 (KRPR) is the Nuclear localization signal element. Over residues 205 to 228 (GGGAGGSSVGTGGGAAGGACGGAG) the composition is skewed to gly residues. The residue at position 215 (Thr-215) is a Phosphothreonine. Residues Ser-229 and Ser-232 each carry the phosphoserine modification. A necessary for interaction with CBX2 region spans residues 230-406 (EDSGDRGGTL…LCYAPTKDPK (177 aa)). Over residues 235–244 (RGGTLGGGTL) the composition is skewed to gly residues. Residues 246–258 (PPSPPGAPSPPEP) show a composition bias toward pro residues. Phosphoserine occurs at positions 248 and 254. A compositionally biased stretch (gly residues) spans 317–343 (GGPGGGASDTGGPDGGGGERGVSGGGE).

Component of chromatin-associated Polycomb (PcG) complexes. Part of the E2F6.com-1 complex in G0 phase composed of E2F6, MGA, MAX, TFDP1, CBX3, BAT8, EUHMTASE1, RING1, RNF2/RING2 MBLR, L3MBTL2 and YAF2. Interacts with CBX2 and PCGF6. Component of a PRC1-like complex. Component of repressive BCOR complex containing Polycomb group subcomplex at least composed of RYBP, PCGF1, BCOR and RNF2/RING2. Interacts with BMI1, PHC2, PCGF2, RNF2; CBX6, CBX7 and CBX8. Interacts with MN1. Interacts with USP26.

The protein localises to the nucleus speckle. It carries out the reaction S-ubiquitinyl-[E2 ubiquitin-conjugating enzyme]-L-cysteine + [acceptor protein]-L-lysine = [E2 ubiquitin-conjugating enzyme]-L-cysteine + N(6)-ubiquitinyl-[acceptor protein]-L-lysine.. It participates in protein modification; protein ubiquitination. Constitutes one of the E3 ubiquitin-protein ligases that mediate monoubiquitination of 'Lys-119' of histone H2A, thereby playing a central role in histone code and gene regulation. H2A 'Lys-119' ubiquitination gives a specific tag for epigenetic transcriptional repression and participates in X chromosome inactivation of female mammals. Essential component of a Polycomb group (PcG) multiprotein PRC1-like complex, a complex class required to maintain the transcriptionally repressive state of many genes, including Hox genes, throughout development. PcG PRC1 complex acts via chromatin remodeling and modification of histones, rendering chromatin heritably changed in its expressibility. Compared to RNF2/RING2, it does not have the main E3 ubiquitin ligase activity on histone H2A, and it may rather act as a modulator of RNF2/RING2 activity. The polypeptide is E3 ubiquitin-protein ligase RING1 (Rattus norvegicus (Rat)).